The following is a 364-amino-acid chain: Putative F-box/kelch-repeat protein At1g12170 (364 aa).

In terms of domain architecture, F-box spans 1-50; that stretch reads MMHVILPWELVEEILYRVPPLSLTRFKIVCKQWNTLFKSKSFVNNHLVRV. Kelch repeat units lie at residues 156 to 205 and 328 to 364; these read SIYN…LNGN and CVYIVRGNALTKIQIVGVDAKNYINHCSYVPSLIPVP.

The polypeptide is Putative F-box/kelch-repeat protein At1g12170 (Arabidopsis thaliana (Mouse-ear cress)).